A 75-amino-acid polypeptide reads, in one-letter code: Lividin-3 (75 aa).

The signal sequence occupies residues 1 to 22; that stretch reads MFTLKKSLLLLFFLGTISLSLC. Positions 23 to 40 are excised as a propeptide; the sequence is EEERDADEDEGEMTEEEV. An intrachain disulfide couples C69 to C75.

As to expression, expressed by the skin glands.

It localises to the secreted. Its function is as follows. Antimicrobial peptide. This chain is Lividin-3, found in Odorrana livida (Green mountain frog).